Here is a 1156-residue protein sequence, read N- to C-terminus: Protein hu-li tai shao (1156 aa).

The interval 1–36 (MTEVEQPPQNGIDPTAGEDDDNSKARPADIEQDMRE) is disordered. Basic and acidic residues predominate over residues 22 to 36 (NSKARPADIEQDMRE). At serine 478 the chain carries Phosphoserine. Phosphothreonine occurs at positions 480 and 498. Serine 603 carries the phosphoserine modification. Tyrosine 608 carries the phosphotyrosine modification. Residues threonine 609 and threonine 611 each carry the phosphothreonine modification. The residue at position 614 (serine 614) is a Phosphoserine. Phosphotyrosine is present on tyrosine 627. Serine 630 carries the post-translational modification Phosphoserine. Residues 897-956 (FLPSNHALPKDTDANNRDQTDRERPEAEQEESFHCAGDSGIGDSTGRRPRLATTSNDSSI) are disordered. Positions 904-929 (LPKDTDANNRDQTDRERPEAEQEESF) are enriched in basic and acidic residues.

Belongs to the aldolase class II family. Adducin subfamily. As to expression, isoform C is expressed in nurse cells. Isoform A is produced in the nurse cell but transported into the oocyte at stage 1, localizes to the oocyte cortex at stage 8 and to the anterior pole from day 9 onwards. Isoform B is expressed in the somatic follicle cells that surround the germline.

It is found in the cytoplasm. It localises to the cytoskeleton. Its subcellular location is the cell membrane. Its function is as follows. Required for assembling actin at ring canals in developing egg chambers. Probably interacts with other developmental proteins involved in nurse cell/oocyte transport through the ring canals. Important for normal neuromotor function. The polypeptide is Protein hu-li tai shao (hts) (Drosophila melanogaster (Fruit fly)).